Consider the following 270-residue polypeptide: ATP synthase subunit a (270 aa).

5 helical membrane-spanning segments follow: residues 40–60, 98–118, 143–163, 208–228, and 239–259; these read IDSLFFSWFTGLIFLGIFYAV, IAPLALTIFCWVFLMNLMDLV, DVNITMAMALGVFALMIYYSI, LFGNMFAGEVVFILCAAMLPW, and AIFHILVILIQAFVFMMLTIV.

This sequence belongs to the ATPase A chain family. F-type ATPases have 2 components, CF(1) - the catalytic core - and CF(0) - the membrane proton channel. CF(1) has five subunits: alpha(3), beta(3), gamma(1), delta(1), epsilon(1). CF(0) has three main subunits: a(1), b(2) and c(9-12). The alpha and beta chains form an alternating ring which encloses part of the gamma chain. CF(1) is attached to CF(0) by a central stalk formed by the gamma and epsilon chains, while a peripheral stalk is formed by the delta and b chains.

It is found in the cell inner membrane. Key component of the proton channel; it plays a direct role in the translocation of protons across the membrane. The protein is ATP synthase subunit a of Vibrio vulnificus (strain CMCP6).